We begin with the raw amino-acid sequence, 450 residues long: Bifunctional protein GlmU (450 aa).

Residues 1 to 229 (MRRHAIILAA…VEEIMGVNDR (229 aa)) are pyrophosphorylase. UDP-N-acetyl-alpha-D-glucosamine is bound by residues 8–11 (LAAG), K22, Q72, and 77–78 (GT). Mg(2+) is bound at residue D102. The UDP-N-acetyl-alpha-D-glucosamine site is built by G139, E154, and N227. N227 contributes to the Mg(2+) binding site. Positions 230–250 (VMLSQAEKAMQRRTNHYHMLN) are linker. The interval 251 to 450 (GVTIIDPDST…RQTTKEGYRK (200 aa)) is N-acetyltransferase. R332 and K350 together coordinate UDP-N-acetyl-alpha-D-glucosamine. H362 functions as the Proton acceptor in the catalytic mechanism. The UDP-N-acetyl-alpha-D-glucosamine site is built by Y365 and N376. Acetyl-CoA is bound by residues 385 to 386 (NY), A422, and R439.

In the N-terminal section; belongs to the N-acetylglucosamine-1-phosphate uridyltransferase family. This sequence in the C-terminal section; belongs to the transferase hexapeptide repeat family. Homotrimer. Requires Mg(2+) as cofactor.

It localises to the cytoplasm. The enzyme catalyses alpha-D-glucosamine 1-phosphate + acetyl-CoA = N-acetyl-alpha-D-glucosamine 1-phosphate + CoA + H(+). It catalyses the reaction N-acetyl-alpha-D-glucosamine 1-phosphate + UTP + H(+) = UDP-N-acetyl-alpha-D-glucosamine + diphosphate. It functions in the pathway nucleotide-sugar biosynthesis; UDP-N-acetyl-alpha-D-glucosamine biosynthesis; N-acetyl-alpha-D-glucosamine 1-phosphate from alpha-D-glucosamine 6-phosphate (route II): step 2/2. The protein operates within nucleotide-sugar biosynthesis; UDP-N-acetyl-alpha-D-glucosamine biosynthesis; UDP-N-acetyl-alpha-D-glucosamine from N-acetyl-alpha-D-glucosamine 1-phosphate: step 1/1. It participates in bacterial outer membrane biogenesis; LPS lipid A biosynthesis. Functionally, catalyzes the last two sequential reactions in the de novo biosynthetic pathway for UDP-N-acetylglucosamine (UDP-GlcNAc). The C-terminal domain catalyzes the transfer of acetyl group from acetyl coenzyme A to glucosamine-1-phosphate (GlcN-1-P) to produce N-acetylglucosamine-1-phosphate (GlcNAc-1-P), which is converted into UDP-GlcNAc by the transfer of uridine 5-monophosphate (from uridine 5-triphosphate), a reaction catalyzed by the N-terminal domain. This is Bifunctional protein GlmU from Staphylococcus aureus (strain NCTC 8325 / PS 47).